A 254-amino-acid chain; its full sequence is Fluoride-specific ion channel FluC 1 (254 aa).

A run of 3 helical transmembrane segments spans residues 19-39 (LDIL…TALY), 51-71 (IIGM…YGSV), and 80-100 (AFLI…VAVL). Na(+) contacts are provided by Gly-58 and Ser-61.

It belongs to the fluoride channel Fluc/FEX (TC 1.A.43) family.

It is found in the cell inner membrane. It carries out the reaction fluoride(in) = fluoride(out). With respect to regulation, na(+) is not transported, but it plays an essential structural role and its presence is essential for fluoride channel function. Its function is as follows. Fluoride-specific ion channel. Important for reducing fluoride concentration in the cell, thus reducing its toxicity. The polypeptide is Fluoride-specific ion channel FluC 1 (Brucella suis biovar 1 (strain 1330)).